A 138-amino-acid polypeptide reads, in one-letter code: uncharacterized protein (138 aa).

This is an uncharacterized protein from Methanocaldococcus jannaschii (strain ATCC 43067 / DSM 2661 / JAL-1 / JCM 10045 / NBRC 100440) (Methanococcus jannaschii).